A 240-amino-acid polypeptide reads, in one-letter code: MNESERKIVEEFQKKTGINFKNEELLFRALCHSSYANEQNQAGRKDVESNEKLEFLGDAVLELFVCEILYKKYPEAEVGDLARAKSAAASEEVLAMVSRELNLGKFLFLGKGEEKTGGRDRDSILADAFEALLAAIYLDQGYHKIKELFEEEFELYIEKIMRGEMLFDYKTALQEIVQSEHKVPPEYVLVRTEKNDGDRIFVVEVRVDGKSIAMGRGRTKKEAEKEAARIAYEKLLKERS.

The RNase III domain occupies 9-141 (VEEFQKKTGI…LLAAIYLDQG (133 aa)). E54 serves as a coordination point for Mg(2+). The active site involves D58. Residues D127 and E130 each coordinate Mg(2+). E130 is a catalytic residue. A DRBM domain is found at 168–237 (DYKTALQEIV…ARIAYEKLLK (70 aa)).

Belongs to the ribonuclease III family. In terms of assembly, homodimer. Requires Mg(2+) as cofactor.

The protein localises to the cytoplasm. The catalysed reaction is Endonucleolytic cleavage to 5'-phosphomonoester.. Functionally, digests double-stranded RNA. Involved in the processing of primary rRNA transcript to yield the immediate precursors to the large and small rRNAs (23S and 16S). Processes some mRNAs, and tRNAs when they are encoded in the rRNA operon. Processes pre-crRNA and tracrRNA of type II CRISPR loci if present in the organism. This is Ribonuclease 3 from Thermotoga petrophila (strain ATCC BAA-488 / DSM 13995 / JCM 10881 / RKU-1).